Here is a 262-residue protein sequence, read N- to C-terminus: Small ribosomal subunit protein eS1 (262 aa).

A compositionally biased stretch (basic and acidic residues) spans 234-251; the sequence is DPKEDSGKNVKSLPESKE. A disordered region spans residues 234–262; the sequence is DPKEDSGKNVKSLPESKEATNILTAELKH.

The protein belongs to the eukaryotic ribosomal protein eS1 family. As to quaternary structure, component of the small ribosomal subunit. Mature ribosomes consist of a small (40S) and a large (60S) subunit. The 40S subunit contains about 33 different proteins and 1 molecule of RNA (18S). The 60S subunit contains about 49 different proteins and 3 molecules of RNA (25S, 5.8S and 5S).

It is found in the cytoplasm. The protein is Small ribosomal subunit protein eS1 of Plasmodium yoelii yoelii.